Here is a 354-residue protein sequence, read N- to C-terminus: tRNA N6-adenosine threonylcarbamoyltransferase (354 aa).

Fe cation is bound by residues His-111 and His-115. Residues 134–138, Asp-167, Gly-180, and Asn-279 contribute to the substrate site; that span reads LVSGG. Asp-319 contributes to the Fe cation binding site.

This sequence belongs to the KAE1 / TsaD family. It depends on Fe(2+) as a cofactor.

The protein localises to the cytoplasm. The catalysed reaction is L-threonylcarbamoyladenylate + adenosine(37) in tRNA = N(6)-L-threonylcarbamoyladenosine(37) in tRNA + AMP + H(+). Its function is as follows. Required for the formation of a threonylcarbamoyl group on adenosine at position 37 (t(6)A37) in tRNAs that read codons beginning with adenine. Is involved in the transfer of the threonylcarbamoyl moiety of threonylcarbamoyl-AMP (TC-AMP) to the N6 group of A37, together with TsaE and TsaB. TsaD likely plays a direct catalytic role in this reaction. In Neisseria gonorrhoeae (strain ATCC 700825 / FA 1090), this protein is tRNA N6-adenosine threonylcarbamoyltransferase.